The chain runs to 456 residues: MESFFSRSTSIVSKLSFLALWIVFLISSSSFTSTEAYDALDPEGNITMKWDVMSWTPDGYVAVVTMFNFQKYRHIQSPGWTLGWKWAKKEVIWSMVGAQTTEQGDCSKYKGNIPHCCKKDPTVVDLLPGTPYNQQIANCCKGGVMNSWVQDPATAASSFQISVGAAGTTNKTVRVPRNFTLMGPGPGYTCGPAKIVRPTKFVTTDTRRTTQAMMTWNITCTYSQFLAQRTPTCCVSLSSFYNETIVGCPTCACGCQNNRTESGACLDPDTPHLASVVSPPTKKGTVLPPLVQCTRHMCPIRVHWHVKQNYKEYWRVKITITNFNYRLNYTQWNLVAQHPNLDNITQIFSFNYKSLTPYAGLNDTAMLWGVKFYNDFLSEAGPLGNVQSEILFRKDQSTFTFEKGWAFPRRIYFNGDNCVMPPPDSYPFLPNGGSRSQFSFVAAVLLPLLVFFFFSA.

The signal sequence occupies residues 1-36; that stretch reads MESFFSRSTSIVSKLSFLALWIVFLISSSSFTSTEA. 9 N-linked (GlcNAc...) asparagine glycosylation sites follow: N45, N170, N178, N217, N242, N258, N328, N343, and N362. Residue N431 is the site of GPI-anchor amidated asparagine attachment. Positions 432-456 are cleaved as a propeptide — removed in mature form; sequence GGSRSQFSFVAAVLLPLLVFFFFSA.

This sequence belongs to the COBRA family. In terms of tissue distribution, expressed in roots, stems, leaves, flowers and siliques. Up-regulated in the root zone of rapid longitudinal expansion.

It localises to the lateral cell membrane. Functionally, involved in determining the orientation of cell expansion, probably by playing an important role in cellulose deposition. May act by recruiting cellulose synthesizing complexes to discrete positions on the cell surface. This Arabidopsis thaliana (Mouse-ear cress) protein is Protein COBRA (COB).